The sequence spans 146 residues: Large ribosomal subunit protein uL15 (146 aa).

Positions 1–54 are disordered; sequence MTIKLHDLRPAPGSKTPRTRVGRGEGSKGKTAGRGTKGTKARKQVPTTFEGGQM.

Belongs to the universal ribosomal protein uL15 family. In terms of assembly, part of the 50S ribosomal subunit.

Functionally, binds to the 23S rRNA. This chain is Large ribosomal subunit protein uL15, found in Mycobacterium marinum (strain ATCC BAA-535 / M).